A 366-amino-acid polypeptide reads, in one-letter code: Flagellar P-ring protein (366 aa).

The signal sequence occupies residues 1 to 20 (MVIKFLSALILLLVTTAAQA).

It belongs to the FlgI family. The basal body constitutes a major portion of the flagellar organelle and consists of four rings (L,P,S, and M) mounted on a central rod.

It is found in the periplasm. It localises to the bacterial flagellum basal body. Assembles around the rod to form the L-ring and probably protects the motor/basal body from shearing forces during rotation. The polypeptide is Flagellar P-ring protein (Escherichia coli O1:K1 / APEC).